The chain runs to 289 residues: ATP synthase gamma chain (289 aa).

Belongs to the ATPase gamma chain family. F-type ATPases have 2 components, CF(1) - the catalytic core - and CF(0) - the membrane proton channel. CF(1) has five subunits: alpha(3), beta(3), gamma(1), delta(1), epsilon(1). CF(0) has three main subunits: a, b and c.

The protein resides in the cell inner membrane. Functionally, produces ATP from ADP in the presence of a proton gradient across the membrane. The gamma chain is believed to be important in regulating ATPase activity and the flow of protons through the CF(0) complex. This is ATP synthase gamma chain from Nitrosococcus oceani (strain ATCC 19707 / BCRC 17464 / JCM 30415 / NCIMB 11848 / C-107).